The following is a 27-amino-acid chain: iraD leader peptide (27 aa).

A short protein whose stop codon overlaps with the start codon of downstream iraD; its mRNA secondary structure is predicted to fold and sequester the Shine-Dalgarno sequence of iraD. When this protein is expressed the downstream iraD is also expressed due to ribosomal coupling. This is iraD leader peptide (idlP) from Escherichia coli (strain K12).